We begin with the raw amino-acid sequence, 566 residues long: Glutamate--tRNA ligase (566 aa).

A 'HIGH' region motif is present at residues 104 to 114 (PNPDGPLHLGN).

This sequence belongs to the class-I aminoacyl-tRNA synthetase family. Glutamate--tRNA ligase type 2 subfamily.

The protein localises to the cytoplasm. The enzyme catalyses tRNA(Glu) + L-glutamate + ATP = L-glutamyl-tRNA(Glu) + AMP + diphosphate. Functionally, catalyzes the attachment of glutamate to tRNA(Glu) in a two-step reaction: glutamate is first activated by ATP to form Glu-AMP and then transferred to the acceptor end of tRNA(Glu). The sequence is that of Glutamate--tRNA ligase from Metallosphaera sedula (strain ATCC 51363 / DSM 5348 / JCM 9185 / NBRC 15509 / TH2).